Here is an 803-residue protein sequence, read N- to C-terminus: MPSSPTSTRKQTNFTASVSAQSRKSISFGNPKSTGGKGYAGANQSKIVASRTMTFLPEMKPAEKLNIASAKLVQVLDPRGVDVTPRPLYHPDPHAMPTKPSKLLTSQEGSMGSDYISSYSLYQNTLNPSMLGQYTRSVIGSSSTVSKSSISTTESMTEDLEDPSYKRDRLASFADVRVMRAPAEAAITKEELERNVEIFLMETETLRFFDLPTVMISTDSEEAEKVIEKNINYEILCRNRLGNDLYVERMMQTFNGAPKNKDVQCDKIIMEEKGVMATTWDLYDSFNIPEASLAAKRSAYLSKASLLVRDRDPKIQDSESSSLMDIESVILAKSHEDEEDNSEKILKSDKLHQDLFYMERVLMENVFQPKLAAYRQLPIYKELEPGQPEEDLQVVNKVTEDEVKKDEEEEMETELEIEITTEQSTIPANLERLWSFSCDLTKGLNVSSLSWNKANSDLLAVGYGNFGFKEQKRGMACCWSIKNPMWPERIYQSPYGVTSVDFSISSPNLLAVGYHNGTVAIYNVQSNHNTPVLDSSESPQKHLGPVWQVQWIEQDRGTTGDDRREILVSISADGRISKWVIRKGLDCHDLMHLKRTTVTSSKKGIEKEKKGEALISRQAPGMCFAFHTKDTNIYLAGTEEGLIHKCSCSYNEQYLETYRGHKGPVYKVTWNPFCPDVFLSCSADWGVMIWHQDNVKPFFTFYPTTYVVYDVAWSPKSAYIFAAANENRVEIWDLQISTLDPLIVNVANPGIKFTTVLFAKQTDCLLVGDSDGQVAVYELRNMPTPTESGRGDVINVLLGPKAN.

Over residues 1-33 (MPSSPTSTRKQTNFTASVSAQSRKSISFGNPKS) the composition is skewed to polar residues. Disordered regions lie at residues 1-41 (MPSS…GYAG), 88-109 (LYHP…SQEG), and 143-163 (STVS…LEDP). The span at 143 to 155 (STVSKSSISTTES) shows a compositional bias: low complexity. WD repeat units lie at residues 492–532 (QSPY…NTPV), 541–589 (KHLG…DCHD), 616–656 (SRQA…QYLE), 660–700 (GHKG…PFFT), 703–742 (PTTY…LDPL), and 748–787 (NPGI…TPTE).

Part of the multisubunit axonemal dynein complex formed at least of two heavy chains and a number of intermediate and light chains. Associated with axonemal dynein subunits such as, DNAH2, DNAI3, and DYNLT1. Interacts with DYNLT1.

The protein localises to the cytoplasm. The protein resides in the cytoskeleton. It is found in the flagellum axoneme. It localises to the cilium axoneme. Its subcellular location is the dynein axonemal particle. Functionally, plays a critical role in the assembly of axonemal dynein complex, thereby playing a role in ciliary motility. In Rattus norvegicus (Rat), this protein is Dynein axonemal intermediate chain 4.